We begin with the raw amino-acid sequence, 361 residues long: MNSVVTRAAIEPRPQAAAEEVVRLIDVKRRFGATPALDGISLNVNRGEILGIIGRSGAGKSTLIRCLNGLERADSGEIRIEGRDITGLQEQELQPLRGRIGMIFQHFNLLSAKTVEDNVALPLKIEGIAKAERLQRAHELLEVVGLADKAQAYPASLSGGQKQRVGIARALAARPALLLSDEATSALDPETTRSILALLRDINRKLGLTILLITHEMEVVRGIADRVAVIDAGRIVEEGQVWSVFANPQTDITRSLLGGIRPQLPDHILSRLSATTGSEVILSVDLAGPEAQGALFAELSAALPHSFRLVHGGIDHIQNQPVARFFIAVPAHEPALAGKVEQFLTARSARVEVLGYDTGHA.

The ABC transporter domain occupies valine 22–leucine 257. Glycine 54–serine 61 contacts ATP.

This sequence belongs to the ABC transporter superfamily. Methionine importer (TC 3.A.1.24) family. In terms of assembly, the complex is composed of two ATP-binding proteins (MetN), two transmembrane proteins (MetI) and a solute-binding protein (MetQ).

The protein localises to the cell inner membrane. It catalyses the reaction L-methionine(out) + ATP + H2O = L-methionine(in) + ADP + phosphate + H(+). The catalysed reaction is D-methionine(out) + ATP + H2O = D-methionine(in) + ADP + phosphate + H(+). Functionally, part of the ABC transporter complex MetNIQ involved in methionine import. Responsible for energy coupling to the transport system. The protein is Methionine import ATP-binding protein MetN of Rhizobium etli (strain ATCC 51251 / DSM 11541 / JCM 21823 / NBRC 15573 / CFN 42).